Consider the following 350-residue polypeptide: D-guloside 3-dehydrogenase (350 aa).

It belongs to the zinc-containing alcohol dehydrogenase family. The cofactor is Zn(2+).

The catalysed reaction is a D-guloside + NAD(+) = a 3-dehydro-D-guloside + NADH + H(+). In terms of biological role, catalyzes the NAD(+)-dependent oxidation of the hydroxyl group at C3 of D-gulosides leading to 3-dehydro-D-gulosides. Probably functions in a metabolic pathway that transforms D-gulosides to D-glucosides. Is also able to catalyze the reverse reactions, i.e. the NADH-dependent reduction of the oxo group at C3 of 3-dehydro-D-gulosides leading to D-gulosides. In vitro, can oxidize D-gulose and methyl beta-D-guloside, and reduce methyl alpha-3-dehydro-D-guloside and methyl beta-3-dehydro-D-guloside. However, the actual specific physiological substrates for this metabolic pathway are unknown. This Escherichia coli (strain K12) protein is D-guloside 3-dehydrogenase (ycjQ).